The sequence spans 375 residues: DNA replication and repair protein RecF (375 aa).

30 to 37 (GKNAQGKT) is an ATP binding site.

The protein belongs to the RecF family.

It is found in the cytoplasm. In terms of biological role, the RecF protein is involved in DNA metabolism; it is required for DNA replication and normal SOS inducibility. RecF binds preferentially to single-stranded, linear DNA. It also seems to bind ATP. In Lactobacillus acidophilus (strain ATCC 700396 / NCK56 / N2 / NCFM), this protein is DNA replication and repair protein RecF.